The primary structure comprises 87 residues: Neutrophil antibiotic peptide NP-3A (87 aa).

The signal sequence occupies residues 1–19 (MRTLTLLTTLLLLALHTQA). Positions 20-58 (ESPQGSTKEAPDEEQDISVFFGGDKGTALQDAAVKAGVT) are excised as a propeptide. 3 disulfide bridges follow: C59–C87, C61–C76, and C66–C86.

Belongs to the alpha-defensin family. In terms of tissue distribution, highest expression in bone marrow and to a much lesser extent in small intestine.

The protein localises to the secreted. Functionally, active in vitro against S.aureus, fungi, Gram-positive and Gram-negative bacteria and to a lesser extent against an enveloped virus. The sequence is that of Neutrophil antibiotic peptide NP-3A from Rattus norvegicus (Rat).